The sequence spans 226 residues: PtdIns3K complex I subunit atg38 (226 aa).

Residue Ser-2 is modified to N-acetylserine. Coiled coils occupy residues 52-85 (DVTQ…ENNI) and 182-209 (FKEY…LRER).

This sequence belongs to the ATG38 family. In terms of assembly, homodimer. Component of the autophagy-specific VPS34 PI3-kinase complex I composed of VPS15, VPS30, VPS34, ATG14 and an ATG38 homodimer. Interacts directly with ATG14 and VPS34.

The protein resides in the cytoplasm. It is found in the preautophagosomal structure membrane. Autophagy-related protein required for cytoplasm to vacuole transport (Cvt) and autophagy as a part of the autophagy-specific VPS34 PI3-kinase complex I. This complex is essential to recruit the ATG8-phosphatidylinositol conjugate and the ATG12-ATG5 conjugate to the pre-autophagosomal structure. ATG38 is required for the integrity of the active PI3-kinase complex I by maintaining an association between VPS15-VPS34 and ATG14-VPS30 subcomplexes. In Saccharomyces cerevisiae (strain ATCC 204508 / S288c) (Baker's yeast), this protein is PtdIns3K complex I subunit atg38.